A 209-amino-acid polypeptide reads, in one-letter code: Uracil phosphoribosyltransferase (209 aa).

5-phospho-alpha-D-ribose 1-diphosphate-binding positions include Arg-79, Arg-104, and 131–139 (DPMLATGGS). Residues Val-194 and 199–201 (GDA) each bind uracil. Position 200 (Asp-200) interacts with 5-phospho-alpha-D-ribose 1-diphosphate.

It belongs to the UPRTase family. Mg(2+) is required as a cofactor.

The enzyme catalyses UMP + diphosphate = 5-phospho-alpha-D-ribose 1-diphosphate + uracil. It functions in the pathway pyrimidine metabolism; UMP biosynthesis via salvage pathway; UMP from uracil: step 1/1. With respect to regulation, allosterically activated by GTP. In terms of biological role, catalyzes the conversion of uracil and 5-phospho-alpha-D-ribose 1-diphosphate (PRPP) to UMP and diphosphate. The protein is Uracil phosphoribosyltransferase of Clostridium botulinum (strain ATCC 19397 / Type A).